A 395-amino-acid chain; its full sequence is Elongation factor Tu (395 aa).

The region spanning 10–204 (KPHVNIGTIG…EVDAYIPTPE (195 aa)) is the tr-type G domain. The tract at residues 19–26 (GHVDHGKT) is G1. 19–26 (GHVDHGKT) contacts GTP. Residue T26 participates in Mg(2+) binding. A G2 region spans residues 60 to 64 (GITIS). The tract at residues 81 to 84 (DCPG) is G3. GTP-binding positions include 81–85 (DCPGH) and 136–139 (NKCD). Positions 136–139 (NKCD) are G4. The segment at 174–176 (SAL) is G5.

It belongs to the TRAFAC class translation factor GTPase superfamily. Classic translation factor GTPase family. EF-Tu/EF-1A subfamily. In terms of assembly, monomer.

It is found in the cytoplasm. It catalyses the reaction GTP + H2O = GDP + phosphate + H(+). In terms of biological role, GTP hydrolase that promotes the GTP-dependent binding of aminoacyl-tRNA to the A-site of ribosomes during protein biosynthesis. The sequence is that of Elongation factor Tu from Bacillus cereus (strain ATCC 10987 / NRS 248).